A 331-amino-acid polypeptide reads, in one-letter code: MSLPEFSMRQLLEAGVHFGHQSHRWNPKMADYIFGVRNNIHIVDLTQTVPLLHRALQAISDTVAKGGRVLFVGTKRQAQDAVADAAKRSAQYFVNSRWLGGTLTNWKTISGSIRRLRHLEDVLSSADANAYTKKERLELQRERDKLNRSLGGIKDMGGLPDLIFVIDTNKEDIAIQEAQRLGIPVAAIVDTNCDPKGITYLVPGNDDAGRAIALYCDLVARAVIDGISRAQGDVGIDIGAAAQPLREDLPAAQATTFQGLPGPRGTPDDLKKLPGVSGAIEKKFNDLGIFHFWQLAELDQATAHQIGEELGLPSRADAWVAQAKSLTAEAE.

It belongs to the universal ribosomal protein uS2 family.

This is Small ribosomal subunit protein uS2 from Rhodopseudomonas palustris (strain ATCC BAA-98 / CGA009).